A 337-amino-acid chain; its full sequence is Monoacylglycerol lipase abhd6-B (337 aa).

The Extracellular portion of the chain corresponds to 1–19; the sequence is MDIDVLNMFLVAGGTLLVP. A helical; Signal-anchor for type II membrane protein membrane pass occupies residues 20-42; the sequence is LLAFMTSFLLWPAALIRIYYWYW. The Cytoplasmic portion of the chain corresponds to 43–337; that stretch reads RRALGMQVKY…QSTDNHKKHD (295 aa). The region spanning 72-313 is the AB hydrolase-1 domain; sequence PSVLMLHGFS…CGHSVVMERP (242 aa). Serine 148 (nucleophile) is an active-site residue. Catalysis depends on charge relay system residues aspartate 278 and histidine 306.

This sequence belongs to the AB hydrolase superfamily.

The protein localises to the late endosome membrane. The protein resides in the lysosome membrane. It is found in the mitochondrion membrane. It catalyses the reaction Hydrolyzes glycerol monoesters of long-chain fatty acids.. The catalysed reaction is 1-octanoylglycerol + H2O = octanoate + glycerol + H(+). The enzyme catalyses 1-decanoylglycerol + H2O = decanoate + glycerol + H(+). It carries out the reaction 1-dodecanoylglycerol + H2O = dodecanoate + glycerol + H(+). It catalyses the reaction 1-tetradecanoylglycerol + H2O = tetradecanoate + glycerol + H(+). The catalysed reaction is 2-hexadecanoylglycerol + H2O = glycerol + hexadecanoate + H(+). The enzyme catalyses 2-(9Z-octadecenoyl)-glycerol + H2O = glycerol + (9Z)-octadecenoate + H(+). It carries out the reaction 1-(9Z-octadecenoyl)-glycerol + H2O = glycerol + (9Z)-octadecenoate + H(+). It catalyses the reaction 2-(9Z,12Z-octadecadienoyl)-glycerol + H2O = (9Z,12Z)-octadecadienoate + glycerol + H(+). The catalysed reaction is 2-(5Z,8Z,11Z,14Z-eicosatetraenoyl)-glycerol + H2O = glycerol + (5Z,8Z,11Z,14Z)-eicosatetraenoate + H(+). The enzyme catalyses 1-(5Z,8Z,11Z,14Z-eicosatetraenoyl)-glycerol + H2O = glycerol + (5Z,8Z,11Z,14Z)-eicosatetraenoate + H(+). It carries out the reaction 1-(9Z,12Z-octadecadienoyl)-glycerol + H2O = (9Z,12Z)-octadecadienoate + glycerol + H(+). It catalyses the reaction 3-(9Z-octadecenoyl)-sn-glycero-1-phospho-(3'-(9Z-octadecenoyl)-1'-sn-glycerol) + H2O = 3-(9Z-octadecenoyl)-sn-glycero-1-phospho-(1'-sn-glycerol) + (9Z)-octadecenoate + H(+). The catalysed reaction is (S,S)-2-(9Z-octadecenoyl)-sn-glycero-1-phospho-(2'-(9Z-octadecenoyl)-1'-sn-glycerol) + H2O = (S,S)-2-(9Z-octadecenoyl)-sn-glycero-1-phospho-(1'-sn-glycerol) + (9Z)-octadecenoate + H(+). The enzyme catalyses (R,R)-2-(9Z-octadecenoyl)-sn-glycero-3-phospho-(2'-(9Z-octadecenoyl)-3'-sn-glycerol) + H2O = (R,R)-2-(9Z-octadecenoyl)-sn-glycero-3-phospho-(3'-sn-glycerol) + (9Z)-octadecenoate + H(+). In terms of biological role, lipase that preferentially hydrolysis medium-chain saturated monoacylglycerols including 2-arachidonoylglycerol. Through 2-arachidonoylglycerol degradation may regulate endocannabinoid signaling pathways. Also has a lysophosphatidyl lipase activity with a preference for lysophosphatidylglycerol among other lysophospholipids. Also able to degrade bis(monoacylglycero)phosphate (BMP) and constitutes the major enzyme for BMP catabolism. BMP, also known as lysobisphosphatidic acid, is enriched in late endosomes and lysosomes and plays a key role in the formation of intraluminal vesicles and in lipid sorting. The polypeptide is Monoacylglycerol lipase abhd6-B (abhd6-b) (Xenopus laevis (African clawed frog)).